A 308-amino-acid polypeptide reads, in one-letter code: Phosphoribosylaminoimidazole-succinocarboxamide synthase (308 aa).

Belongs to the SAICAR synthetase family.

It catalyses the reaction 5-amino-1-(5-phospho-D-ribosyl)imidazole-4-carboxylate + L-aspartate + ATP = (2S)-2-[5-amino-1-(5-phospho-beta-D-ribosyl)imidazole-4-carboxamido]succinate + ADP + phosphate + 2 H(+). The protein operates within purine metabolism; IMP biosynthesis via de novo pathway; 5-amino-1-(5-phospho-D-ribosyl)imidazole-4-carboxamide from 5-amino-1-(5-phospho-D-ribosyl)imidazole-4-carboxylate: step 1/2. The protein is Phosphoribosylaminoimidazole-succinocarboxamide synthase of Xanthomonas oryzae pv. oryzae (strain PXO99A).